The primary structure comprises 313 residues: Small ribosomal subunit protein uS2 (313 aa).

Residues 281–301 (AAPAAPAVEPAPEAAQEATAE) are disordered.

This sequence belongs to the universal ribosomal protein uS2 family.

In Caulobacter sp. (strain K31), this protein is Small ribosomal subunit protein uS2.